The sequence spans 611 residues: Developmental and secondary metabolism regulator veA (611 aa).

Disordered regions lie at residues M1–D57, R222–D497, and L511–A611. Over residues K14–D23 the composition is skewed to polar residues. Residues G24–R216 enclose the Velvet domain. The Nuclear localization signal motif lies at Q38–C43. A compositionally biased stretch (low complexity) spans A242–S254. Residues S274–P290 are compositionally biased toward polar residues. The span at Y330–P340 shows a compositional bias: low complexity. Residues P341 to V361 show a composition bias toward pro residues. A compositionally biased stretch (low complexity) spans T362–P377. A compositionally biased stretch (polar residues) spans R419 to T434. 2 stretches are compositionally biased toward low complexity: residues Q435–Q452 and Q461–M471. Positions P455–P499 are PEST. Over residues L511–I533 the composition is skewed to polar residues.

It belongs to the velvet family. VeA subfamily. Component of the heterotrimeric velvet complex composed of laeA, veA and velB; VeA acting as a bridging protein between laeA and velB.

Its subcellular location is the nucleus. It is found in the cytoplasm. Functionally, component of the velvet transcription factor complex that controls sexual/asexual developmental ratio in response to light, promoting sexual development in the darkness while stimulating asexual sporulation under illumination. The velvet complex hat acts as a global regulator for secondary metabolite gene expression. Controls the expression of the dothistromin gene cluster. Regulates hyphal growth and pigment formation. Acts as a positive regulator of virulence. In Dothistroma septosporum (strain NZE10 / CBS 128990) (Red band needle blight fungus), this protein is Developmental and secondary metabolism regulator veA.